A 48-amino-acid chain; its full sequence is Entericidin B (48 aa).

An N-terminal signal peptide occupies residues 1–21; sequence MVKKTIAAIFSVLVLSTVLTA. Residue C22 is the site of N-palmitoyl cysteine attachment. C22 carries the S-diacylglycerol cysteine lipid modification.

The protein belongs to the EcnA/EcnB lipoprotein family.

It is found in the cell membrane. Its function is as follows. Plays a role in the bacteriolysis. Is activated under conditions of high osmolarity by the factor sigma S. Entericidin A functions as an antidote. This is Entericidin B (ecnB) from Escherichia coli O157:H7.